The sequence spans 311 residues: Probable manganese-dependent inorganic pyrophosphatase (311 aa).

Positions 9, 13, 15, 77, 99, and 151 each coordinate Mn(2+).

The protein belongs to the PPase class C family. Mn(2+) serves as cofactor.

It localises to the cytoplasm. The enzyme catalyses diphosphate + H2O = 2 phosphate + H(+). The polypeptide is Probable manganese-dependent inorganic pyrophosphatase (Streptococcus pneumoniae (strain JJA)).